A 367-amino-acid polypeptide reads, in one-letter code: Glutamate 5-kinase (367 aa).

Lys-9 contributes to the ATP binding site. Substrate contacts are provided by Ser-49, Asp-136, and Asn-148. Residues 168–169 (TD) and 210–216 (TGGMKSK) each bind ATP. Residues 276-350 (SGQIEIDAGA…GMQSQHIQAR (75 aa)) enclose the PUA domain.

The protein belongs to the glutamate 5-kinase family.

The protein localises to the cytoplasm. It catalyses the reaction L-glutamate + ATP = L-glutamyl 5-phosphate + ADP. It functions in the pathway amino-acid biosynthesis; L-proline biosynthesis; L-glutamate 5-semialdehyde from L-glutamate: step 1/2. Its function is as follows. Catalyzes the transfer of a phosphate group to glutamate to form L-glutamate 5-phosphate. This chain is Glutamate 5-kinase, found in Bacillus cereus (strain ATCC 10987 / NRS 248).